The chain runs to 385 residues: S-adenosylmethionine synthase (385 aa).

Residue His-16 coordinates ATP. Mg(2+) is bound at residue Asp-18. Glu-44 contacts K(+). Positions 57 and 100 each coordinate L-methionine. The interval 100–110 is flexible loop; the sequence is QSPDINQGVDK. Residues 165–167, 231–232, Asp-240, 246–247, Ala-263, and Lys-267 contribute to the ATP site; these read DAK, RF, and RK. Asp-240 contacts L-methionine. Residue Lys-271 participates in L-methionine binding.

This sequence belongs to the AdoMet synthase family. In terms of assembly, homotetramer; dimer of dimers. Mg(2+) serves as cofactor. It depends on K(+) as a cofactor.

The protein resides in the cytoplasm. The catalysed reaction is L-methionine + ATP + H2O = S-adenosyl-L-methionine + phosphate + diphosphate. Its pathway is amino-acid biosynthesis; S-adenosyl-L-methionine biosynthesis; S-adenosyl-L-methionine from L-methionine: step 1/1. In terms of biological role, catalyzes the formation of S-adenosylmethionine (AdoMet) from methionine and ATP. The overall synthetic reaction is composed of two sequential steps, AdoMet formation and the subsequent tripolyphosphate hydrolysis which occurs prior to release of AdoMet from the enzyme. The protein is S-adenosylmethionine synthase of Vibrio cholerae serotype O1 (strain ATCC 39315 / El Tor Inaba N16961).